Here is a 339-residue protein sequence, read N- to C-terminus: tRNA N6-adenosine threonylcarbamoyltransferase (339 aa).

Histidine 112 and histidine 116 together coordinate Fe cation. Residues 135–139 (LVSGG), aspartate 168, glycine 181, and asparagine 273 each bind substrate. Aspartate 301 contacts Fe cation.

Belongs to the KAE1 / TsaD family. Fe(2+) is required as a cofactor.

It is found in the cytoplasm. It carries out the reaction L-threonylcarbamoyladenylate + adenosine(37) in tRNA = N(6)-L-threonylcarbamoyladenosine(37) in tRNA + AMP + H(+). Required for the formation of a threonylcarbamoyl group on adenosine at position 37 (t(6)A37) in tRNAs that read codons beginning with adenine. Is involved in the transfer of the threonylcarbamoyl moiety of threonylcarbamoyl-AMP (TC-AMP) to the N6 group of A37, together with TsaE and TsaB. TsaD likely plays a direct catalytic role in this reaction. The protein is tRNA N6-adenosine threonylcarbamoyltransferase of Coxiella burnetii (strain RSA 493 / Nine Mile phase I).